Reading from the N-terminus, the 136-residue chain is MAVKIRLKRFGKMRAPYYRIVVMDSRAKRDGRAIEEIGKYHPTEEPSYIEVASERAQYWLSVGAQPSEQVAAILKITGDWQKFKGLPGQEGTLKTKGEKEAFVAPEKGSVIIPEAITKKASKSEAAEAEAETTEAE.

This sequence belongs to the bacterial ribosomal protein bS16 family.

The polypeptide is Small ribosomal subunit protein bS16 (Pseudarthrobacter chlorophenolicus (strain ATCC 700700 / DSM 12829 / CIP 107037 / JCM 12360 / KCTC 9906 / NCIMB 13794 / A6) (Arthrobacter chlorophenolicus)).